The sequence spans 274 residues: NADPH-dependent 7-cyano-7-deazaguanine reductase (274 aa).

80-82 serves as a coordination point for substrate; that stretch reads VES. An NADPH-binding site is contributed by 82–83; the sequence is SK. The Thioimide intermediate role is filled by Cys181. Asp188 acts as the Proton donor in catalysis. 220–221 contributes to the substrate binding site; it reads HE. 249 to 250 is a binding site for NADPH; the sequence is RG.

Belongs to the GTP cyclohydrolase I family. QueF type 2 subfamily. As to quaternary structure, homodimer.

It is found in the cytoplasm. The enzyme catalyses 7-aminomethyl-7-carbaguanine + 2 NADP(+) = 7-cyano-7-deazaguanine + 2 NADPH + 3 H(+). It functions in the pathway tRNA modification; tRNA-queuosine biosynthesis. Its function is as follows. Catalyzes the NADPH-dependent reduction of 7-cyano-7-deazaguanine (preQ0) to 7-aminomethyl-7-deazaguanine (preQ1). This Paraburkholderia xenovorans (strain LB400) protein is NADPH-dependent 7-cyano-7-deazaguanine reductase.